The following is a 307-amino-acid chain: Probable thioesterase KK1J (307 aa).

The protein belongs to the AMT4 thioesterase family.

It functions in the pathway secondary metabolite biosynthesis. In terms of biological role, probable thioesterase; part of the gene cluster that mediates the biosynthesis of KK-1, a novel cyclic depsipeptide with 10 residues which is a promising active compound with high activity against many plant pathogens, especially Botrytis cinerea. Within the pathway, kk1J is not essential for the biosynthesis of KK-1, but plays a role for efficient production via correction of peptide chain synthesis by kk1B. The nonribosomal peptide synthetase (NRPS) kk1B catalyzes the elongation and cyclization of the decapeptide chain composed of 1 D-lactic acid residue (D-Lac), 1 pipecolic acid residue (Pip), 1 aspartic acid residue (Asp), 1 isoleucine residue (Ile), 1 glycine residue (Gly), 1 tyrosine residue (Tyr) and 4 valine residues (Val). The Asp, Ile and 3 Val residues are N-methylated by the 5 methyltransferase domains from the NRPS (found in modules 3, 5, 6, 7 and 9), whereas the Tyr residue is O-methylated by the cluster encoded O-methyltransferase kk1A. The thioesterase kk1J is likely to be involved in the corrective mechanism of peptide chain synthesis. The D-lactate dehydrogenase kk1H is involved in the synthesis of D-lactic acid from pyruvic acid, which is recognized by the A domain of the first kk1B module. The pyrroline-5-carboxylate reductase kk1I is involved in the synthesis of the L-pipecolic acid residue of KK-1 from delta-1-pyrroline-5-carboxylate (P5C), a metabolic intermediate of lysine. It still is unclear how kk1C and kk1D are involved in the production of KK-1. This chain is Probable thioesterase KK1J, found in Curvularia clavata.